A 288-amino-acid polypeptide reads, in one-letter code: 2-hydroxy-6-oxononadienedioate/2-hydroxy-6-oxononatrienedioate hydrolase (288 aa).

Catalysis depends on His267, which acts as the Proton acceptor.

It belongs to the AB hydrolase superfamily. MhpC family. In terms of assembly, homodimer.

It carries out the reaction (2Z,4E)-2-hydroxy-6-oxonona-2,4-dienedioate + H2O = (2Z)-2-hydroxypenta-2,4-dienoate + succinate + H(+). The catalysed reaction is (2Z,4E,7E)-2-hydroxy-6-oxonona-2,4,7-trienedioate + H2O = (2Z)-2-hydroxypenta-2,4-dienoate + fumarate + H(+). Its pathway is aromatic compound metabolism; 3-phenylpropanoate degradation. Its function is as follows. Catalyzes the cleavage of the C5-C6 bond of 2-hydroxy-6-oxononadienedioate and 2-hydroxy-6-oxononatrienedioate, a dienol ring fission product of the bacterial meta-cleavage pathway for degradation of phenylpropionic acid. In Klebsiella pneumoniae subsp. pneumoniae (strain ATCC 700721 / MGH 78578), this protein is 2-hydroxy-6-oxononadienedioate/2-hydroxy-6-oxononatrienedioate hydrolase.